A 785-amino-acid polypeptide reads, in one-letter code: Phenylalanine--tRNA ligase beta subunit (785 aa).

Residues 39–147 (FPIPRGVVFA…DALPPGTPLA (109 aa)) enclose the tRNA-binding domain. Residues 399 to 474 (KPPEAIPFRP…RIQGYETIPL (76 aa)) enclose the B5 domain. 4 residues coordinate Mg(2+): aspartate 452, aspartate 458, glutamate 461, and glutamate 462. The region spanning 688-780 (SRHPAAFRDL…ALRARGFGLR (93 aa)) is the FDX-ACB domain.

It belongs to the phenylalanyl-tRNA synthetase beta subunit family. Type 1 subfamily. In terms of assembly, tetramer of two alpha and two beta subunits. The cofactor is Mg(2+).

It is found in the cytoplasm. It carries out the reaction tRNA(Phe) + L-phenylalanine + ATP = L-phenylalanyl-tRNA(Phe) + AMP + diphosphate + H(+). This chain is Phenylalanine--tRNA ligase beta subunit, found in Thermus thermophilus (strain ATCC BAA-163 / DSM 7039 / HB27).